The following is a 368-amino-acid chain: Agmatine deiminase (368 aa).

Catalysis depends on Cys357, which acts as the Amidino-cysteine intermediate.

This sequence belongs to the agmatine deiminase family. As to quaternary structure, homodimer.

It carries out the reaction agmatine + H2O = N-carbamoylputrescine + NH4(+). It participates in amine and polyamine biosynthesis; putrescine biosynthesis via agmatine pathway; N-carbamoylputrescine from agmatine: step 1/1. In terms of biological role, mediates the hydrolysis of agmatine into N-carbamoylputrescine in the arginine decarboxylase (ADC) pathway of putrescine biosynthesis, a basic polyamine. The chain is Agmatine deiminase from Stutzerimonas stutzeri (strain A1501) (Pseudomonas stutzeri).